The following is a 152-amino-acid chain: Pertussis toxin subunit 4 (152 aa).

A signal peptide spans M1–A42. Cystine bridges form between C73–C93 and C145–C151.

As to quaternary structure, pertussis toxin contains five different chains, S1-S5. They are organized into 2 functional subunits: A, composed of S1 (which is toxic) and B, containing S2, S3, S5, and two copies of S4 (B binds to the membrane receptors). Dimers of S2-S4 and S3-S4 are held together by S5.

The protein localises to the secreted. It localises to the host cell membrane. PTX oligomer B binds to receptors on the eukaryotic cell surface and facilitates the translocation of the toxic subunit across the cell membrane. This is Pertussis toxin subunit 4 (ptxD) from Bordetella parapertussis (strain 12822 / ATCC BAA-587 / NCTC 13253).